We begin with the raw amino-acid sequence, 161 residues long: Nucleotide-binding protein Sfri_0732 (161 aa).

It belongs to the YajQ family.

Functionally, nucleotide-binding protein. This is Nucleotide-binding protein Sfri_0732 from Shewanella frigidimarina (strain NCIMB 400).